Here is a 131-residue protein sequence, read N- to C-terminus: Putative gamma-taxilin 2 (131 aa).

It belongs to the taxilin family. In terms of tissue distribution, ubiquitously expressed.

The protein is Putative gamma-taxilin 2 (TXLNGY) of Homo sapiens (Human).